Reading from the N-terminus, the 222-residue chain is Putative ankyrin repeat protein L36 (222 aa).

ANK repeat units follow at residues 1 to 14, 15 to 44, 45 to 74, 76 to 104, 105 to 134, 136 to 161, and 163 to 191; these read MVKY…NVDA, QNSR…NIYA, NDNH…NIRA, EDSA…TNYE, YSDY…KITD, AMFM…SLPC, and SYSE…KINK.

The protein is Putative ankyrin repeat protein L36 of Acanthamoeba polyphaga (Amoeba).